Here is a 516-residue protein sequence, read N- to C-terminus: Cytochrome P450 1A2 (516 aa).

O-linked (GlcNAc) serine glycosylation is present at Ser-69. Phe-226 is a binding site for substrate. Cys-458 serves as a coordination point for heme.

Belongs to the cytochrome P450 family. As to quaternary structure, interacts with PGRMC1; the interaction requires PGRMC1 homodimerization. Requires heme as cofactor.

The protein resides in the endoplasmic reticulum membrane. Its subcellular location is the microsome membrane. It catalyses the reaction an organic molecule + reduced [NADPH--hemoprotein reductase] + O2 = an alcohol + oxidized [NADPH--hemoprotein reductase] + H2O + H(+). The enzyme catalyses 17beta-estradiol + reduced [NADPH--hemoprotein reductase] + O2 = 2-hydroxy-17beta-estradiol + oxidized [NADPH--hemoprotein reductase] + H2O + H(+). The catalysed reaction is 17beta-estradiol + reduced [NADPH--hemoprotein reductase] + O2 = 4-hydroxy-17beta-estradiol + oxidized [NADPH--hemoprotein reductase] + H2O + H(+). It carries out the reaction estrone + reduced [NADPH--hemoprotein reductase] + O2 = 2-hydroxyestrone + oxidized [NADPH--hemoprotein reductase] + H2O + H(+). It catalyses the reaction estrone + reduced [NADPH--hemoprotein reductase] + O2 = 4-hydroxyestrone + oxidized [NADPH--hemoprotein reductase] + H2O + H(+). The enzyme catalyses cholesterol + reduced [NADPH--hemoprotein reductase] + O2 = 25-hydroxycholesterol + oxidized [NADPH--hemoprotein reductase] + H2O + H(+). The catalysed reaction is all-trans-retinol + reduced [NADPH--hemoprotein reductase] + O2 = all-trans-retinal + oxidized [NADPH--hemoprotein reductase] + 2 H2O + H(+). It carries out the reaction all-trans-retinal + reduced [NADPH--hemoprotein reductase] + O2 = all-trans-retinoate + oxidized [NADPH--hemoprotein reductase] + H2O + 2 H(+). It catalyses the reaction (5Z,8Z,11Z,14Z)-eicosatetraenoate + reduced [NADPH--hemoprotein reductase] + O2 = (14R,15S)-epoxy-(5Z,8Z,11Z)-eicosatrienoate + oxidized [NADPH--hemoprotein reductase] + H2O + H(+). The enzyme catalyses (5Z,8Z,11Z,14Z)-eicosatetraenoate + reduced [NADPH--hemoprotein reductase] + O2 = (14S,15R)-epoxy-(5Z,8Z,11Z)-eicosatrienoate + oxidized [NADPH--hemoprotein reductase] + H2O + H(+). The catalysed reaction is (5Z,8Z,11Z,14Z,17Z)-eicosapentaenoate + reduced [NADPH--hemoprotein reductase] + O2 = (17R,18S)-epoxy-(5Z,8Z,11Z,14Z)-eicosatetraenoate + oxidized [NADPH--hemoprotein reductase] + H2O + H(+). It carries out the reaction (4Z,7Z,10Z,13Z,16Z,19Z)-docosahexaenoate + reduced [NADPH--hemoprotein reductase] + O2 = (19R,20S)-epoxy-(4Z,7Z,10Z,13Z,16Z)-docosapentaenoate + oxidized [NADPH--hemoprotein reductase] + H2O + H(+). It catalyses the reaction (5S)-hydroperoxy-(6E,8Z,11Z,14Z)-eicosatetraenoate = 5-oxo-(6E,8Z,11Z,14Z)-eicosatetraenoate + H2O. The enzyme catalyses (12S)-hydroperoxy-(5Z,8Z,10E,14Z)-eicosatetraenoate = 12-oxo-(5Z,8Z,10E,14Z)-eicosatetraenoate + H2O. The catalysed reaction is (15S)-hydroperoxy-(5Z,8Z,11Z,13E)-eicosatetraenoate = 15-oxo-(5Z,8Z,11Z,13E)-eicosatetraenoate + H2O. It carries out the reaction (13S)-hydroperoxy-(9Z,11E)-octadecadienoate = 13-oxo-(9Z,11E)-octadecadienoate + H2O. It catalyses the reaction (5Z,8Z,11Z,14Z)-eicosatetraenoate + reduced [NADPH--hemoprotein reductase] + O2 = 13-hydroxy-(5Z,8Z,11Z,14Z)-eicosatetraenoate + oxidized [NADPH--hemoprotein reductase] + H2O + H(+). The enzyme catalyses (5Z,8Z,11Z,14Z)-eicosatetraenoate + reduced [NADPH--hemoprotein reductase] + O2 = 19-hydroxy-(5Z,8Z,11Z,14Z)-eicosatetraenoate + oxidized [NADPH--hemoprotein reductase] + H2O + H(+). The catalysed reaction is (9Z,12Z)-octadecadienoate + reduced [NADPH--hemoprotein reductase] + O2 = 11-hydroxy-(9Z,12Z)-octadecadienoate + oxidized [NADPH--hemoprotein reductase] + H2O + H(+). The protein operates within cofactor metabolism; retinol metabolism. It participates in steroid metabolism; cholesterol metabolism. It functions in the pathway lipid metabolism; arachidonate metabolism. In terms of biological role, a cytochrome P450 monooxygenase involved in the metabolism of various endogenous substrates, including fatty acids, steroid hormones and vitamins. Mechanistically, uses molecular oxygen inserting one oxygen atom into a substrate, and reducing the second into a water molecule, with two electrons provided by NADPH via cytochrome P450 reductase (NADPH--hemoprotein reductase). Catalyzes the hydroxylation of carbon-hydrogen bonds. Exhibits high catalytic activity for the formation of hydroxyestrogens from estrone (E1) and 17beta-estradiol (E2), namely 2-hydroxy E1 and E2. Metabolizes cholesterol toward 25-hydroxycholesterol, a physiological regulator of cellular cholesterol homeostasis. May act as a major enzyme for all-trans retinoic acid biosynthesis in the liver. Catalyzes two successive oxidative transformation of all-trans retinol to all-trans retinal and then to the active form all-trans retinoic acid. Primarily catalyzes stereoselective epoxidation of the last double bond of polyunsaturated fatty acids (PUFA), displaying a strong preference for the (R,S) stereoisomer. Catalyzes bisallylic hydroxylation and omega-1 hydroxylation of PUFA. May also participate in eicosanoids metabolism by converting hydroperoxide species into oxo metabolites (lipoxygenase-like reaction, NADPH-independent). Plays a role in the oxidative metabolism of xenobiotics. Catalyzes the N-hydroxylation of heterocyclic amines and the O-deethylation of phenacetin. Metabolizes caffeine via N3-demethylation. This Macaca fuscata fuscata (Japanese macaque) protein is Cytochrome P450 1A2 (CYP1A2).